The following is a 309-amino-acid chain: MVYFLPIIFSILVVFAFVLGNFSNGFIALVNVIDWVKRQKISSADQILTALVVSRVGLLWVILLHWYANVFNSALYSLEVRIVASNISAVINHFSIWLAASLSIFYLLKIANFSNLIFLHLKKRIKSVVLVILLGPLVFLICNLAVITMDERVWTKEYEGNVTWKIKLRNAIHLSSLTVTTLANLIPFTLSLICFLLLICSLCKHLKKMQLHSKGSQDPSTKVHIKALQTVISFLMLCAIYFLSIMISVWNLRSLENKPVFMFCKAIRFSYPSIHPFILIWGNKKLKQTFLSVFWQVRYWVKGEKPSSP.

Residue Met-1 is a topological domain, extracellular. A helical membrane pass occupies residues 2–22; sequence VYFLPIIFSILVVFAFVLGNF. Residues 23 to 46 are Cytoplasmic-facing; it reads SNGFIALVNVIDWVKRQKISSADQ. The helical transmembrane segment at 47-67 threads the bilayer; the sequence is ILTALVVSRVGLLWVILLHWY. At 68–86 the chain is on the extracellular side; sequence ANVFNSALYSLEVRIVASN. Asn-86 carries an N-linked (GlcNAc...) asparagine glycan. Residues 87-107 form a helical membrane-spanning segment; it reads ISAVINHFSIWLAASLSIFYL. Over 108–127 the chain is Cytoplasmic; the sequence is LKIANFSNLIFLHLKKRIKS. A helical membrane pass occupies residues 128 to 148; the sequence is VVLVILLGPLVFLICNLAVIT. The Extracellular portion of the chain corresponds to 149–181; that stretch reads MDERVWTKEYEGNVTWKIKLRNAIHLSSLTVTT. N-linked (GlcNAc...) asparagine glycosylation occurs at Asn-161. Residues 182-202 form a helical membrane-spanning segment; it reads LANLIPFTLSLICFLLLICSL. The Cytoplasmic segment spans residues 203–229; sequence CKHLKKMQLHSKGSQDPSTKVHIKALQ. Residues 230–250 traverse the membrane as a helical segment; that stretch reads TVISFLMLCAIYFLSIMISVW. Over 251–259 the chain is Extracellular; that stretch reads NLRSLENKP. A helical membrane pass occupies residues 260 to 280; the sequence is VFMFCKAIRFSYPSIHPFILI. The Cytoplasmic portion of the chain corresponds to 281–309; it reads WGNKKLKQTFLSVFWQVRYWVKGEKPSSP.

This sequence belongs to the G-protein coupled receptor T2R family.

The protein resides in the membrane. Its function is as follows. Putative taste receptor which may play a role in the perception of bitterness. The protein is Putative taste receptor type 2 member 33 of Homo sapiens (Human).